A 131-amino-acid chain; its full sequence is Bacteriohemerythrin (131 aa).

Fe cation is bound by residues His-20, Glu-23, His-56, Glu-60, His-75, His-79, His-117, and Asp-122.

Belongs to the hemerythrin family. Monomer.

In terms of biological role, oxygen-binding protein. May be involved in a storage mechanism or for delivery to oxygen-requiring enzymes. The oxygen-binding site contains two iron atoms. In Aquifex aeolicus (strain VF5), this protein is Bacteriohemerythrin.